The sequence spans 547 residues: CTP synthase (547 aa).

The segment at 1–265 is amidoligase domain; sequence MARYIFITGG…DQAVLDAFQI (265 aa). Serine 13 is a CTP binding site. Residue serine 13 coordinates UTP. Residues 14-19 and aspartate 71 each bind ATP; that span reads SLGKGL. Residues aspartate 71 and glutamate 139 each contribute to the Mg(2+) site. Residues 146–148, 186–191, and lysine 222 contribute to the CTP site; these read DIE and KTKPTQ. UTP-binding positions include 186–191 and lysine 222; that span reads KTKPTQ. The Glutamine amidotransferase type-1 domain occupies 291 to 546; that stretch reads RIAVVGKYTQ…IRAAMDNERL (256 aa). Glycine 352 serves as a coordination point for L-glutamine. Cysteine 379 serves as the catalytic Nucleophile; for glutamine hydrolysis. L-glutamine is bound by residues 380-383, glutamate 403, and arginine 474; that span reads LGMQ. Catalysis depends on residues histidine 519 and glutamate 521.

The protein belongs to the CTP synthase family. In terms of assembly, homotetramer.

It catalyses the reaction UTP + L-glutamine + ATP + H2O = CTP + L-glutamate + ADP + phosphate + 2 H(+). It carries out the reaction L-glutamine + H2O = L-glutamate + NH4(+). The catalysed reaction is UTP + NH4(+) + ATP = CTP + ADP + phosphate + 2 H(+). Its pathway is pyrimidine metabolism; CTP biosynthesis via de novo pathway; CTP from UDP: step 2/2. Allosterically activated by GTP, when glutamine is the substrate; GTP has no effect on the reaction when ammonia is the substrate. The allosteric effector GTP functions by stabilizing the protein conformation that binds the tetrahedral intermediate(s) formed during glutamine hydrolysis. Inhibited by the product CTP, via allosteric rather than competitive inhibition. In terms of biological role, catalyzes the ATP-dependent amination of UTP to CTP with either L-glutamine or ammonia as the source of nitrogen. Regulates intracellular CTP levels through interactions with the four ribonucleotide triphosphates. The chain is CTP synthase from Paracoccus denitrificans (strain Pd 1222).